The chain runs to 370 residues: Aminomethyltransferase (370 aa).

This sequence belongs to the GcvT family. As to quaternary structure, the glycine cleavage system is composed of four proteins: P, T, L and H.

It carries out the reaction N(6)-[(R)-S(8)-aminomethyldihydrolipoyl]-L-lysyl-[protein] + (6S)-5,6,7,8-tetrahydrofolate = N(6)-[(R)-dihydrolipoyl]-L-lysyl-[protein] + (6R)-5,10-methylene-5,6,7,8-tetrahydrofolate + NH4(+). Functionally, the glycine cleavage system catalyzes the degradation of glycine. In Prochlorococcus marinus (strain MIT 9301), this protein is Aminomethyltransferase.